The primary structure comprises 88 residues: Small ribosomal subunit protein uS15 (88 aa).

It belongs to the universal ribosomal protein uS15 family. As to quaternary structure, part of the 30S ribosomal subunit. Forms a bridge to the 50S subunit in the 70S ribosome, contacting the 23S rRNA.

Functionally, one of the primary rRNA binding proteins, it binds directly to 16S rRNA where it helps nucleate assembly of the platform of the 30S subunit by binding and bridging several RNA helices of the 16S rRNA. In terms of biological role, forms an intersubunit bridge (bridge B4) with the 23S rRNA of the 50S subunit in the ribosome. The polypeptide is Small ribosomal subunit protein uS15 (Hydrogenovibrio crunogenus (strain DSM 25203 / XCL-2) (Thiomicrospira crunogena)).